The following is a 547-amino-acid chain: Ribosome protection protein VmlR (547 aa).

In terms of domain architecture, ABC transporter 1 spans 5-200; the sequence is VTLTNVSYEV…FREKKRLTQQ (196 aa). Position 37–44 (37–44) interacts with ATP; it reads GKNGAGKS. The interval 183 to 289 is antibiotic resistance domain (ARD); that stretch reads GNYSGYMKFR…SIDTTHKTGK (107 aa). Coiled coils occupy residues 193 to 222 and 245 to 269; these read EKKRLTQQREYEKQQKMVERIEAQMNGLAS and AKRTDAQIKSKQKRLEKELEKAKAE. The region spanning 292-504 is the ABC transporter 2 domain; it reads LEVQNVTKAF…REELRLKLET (213 aa). 324-331 is a binding site for ATP; the sequence is GPNGSGKT. The tract at residues 483–547 is C-terminal extension (CTE); it reads KQLNDVPSER…KELDHQDKKD (65 aa). The stretch at 488–543 forms a coiled coil; it reads VPSERNEREELRLKLETERQEVLGKLSFMTPNDKGYKELDQAFNELTKRIKELDHQ.

It belongs to the ABC transporter superfamily. ABCF family. ARE2 subfamily. Binds within the E-site of the 70S ribosome, where it contacts ribosomal proteins L1, L5, L33-1, S7, S11, the 16 and 23S rRNAs and the acceptor arm of the P-site tRNA.

It localises to the cytoplasm. Functionally, recognizes and binds in the vacant E-site of ribosomes stalled by some peptidyltransferase center (PTC)-targeting antibiotics. Makes contact with the PTC and both ribosomal subunits. Induces conformational changes in the P-site, which allows it to dislodge the antibiotic from its PTC binding site. Binds to ribosomes either directly following translation initation or subsequent to E tRNA release during elongation. Involved in resistance to a narrow spectrum of antibiotics (the streptogramin A antibiotic virginiamycin M, the lincosamide antibiotic lincomycin and the pleuromutilin antibiotic tiamulin). The protein is Ribosome protection protein VmlR of Bacillus subtilis (strain 168).